We begin with the raw amino-acid sequence, 172 residues long: Large ribosomal subunit protein uL10 (172 aa).

The protein belongs to the universal ribosomal protein uL10 family. In terms of assembly, part of the ribosomal stalk of the 50S ribosomal subunit. The N-terminus interacts with L11 and the large rRNA to form the base of the stalk. The C-terminus forms an elongated spine to which L12 dimers bind in a sequential fashion forming a multimeric L10(L12)X complex.

Its function is as follows. Forms part of the ribosomal stalk, playing a central role in the interaction of the ribosome with GTP-bound translation factors. The sequence is that of Large ribosomal subunit protein uL10 from Bartonella tribocorum (strain CIP 105476 / IBS 506).